The primary structure comprises 101 residues: Phosphoribosyl-AMP cyclohydrolase (101 aa).

Aspartate 71 contacts Mg(2+). Position 72 (cysteine 72) interacts with Zn(2+). 2 residues coordinate Mg(2+): aspartate 73 and aspartate 75. Positions 88 and 95 each coordinate Zn(2+).

Belongs to the PRA-CH family. As to quaternary structure, homodimer. Requires Mg(2+) as cofactor. The cofactor is Zn(2+).

The protein localises to the cytoplasm. It catalyses the reaction 1-(5-phospho-beta-D-ribosyl)-5'-AMP + H2O = 1-(5-phospho-beta-D-ribosyl)-5-[(5-phospho-beta-D-ribosylamino)methylideneamino]imidazole-4-carboxamide. It participates in amino-acid biosynthesis; L-histidine biosynthesis; L-histidine from 5-phospho-alpha-D-ribose 1-diphosphate: step 3/9. In terms of biological role, catalyzes the hydrolysis of the adenine ring of phosphoribosyl-AMP. The polypeptide is Phosphoribosyl-AMP cyclohydrolase (Bacillus cereus (strain B4264)).